Reading from the N-terminus, the 257-residue chain is Large ribosomal subunit protein uL2 (257 aa).

Positions 210–231 are disordered; it reads PHGGGNHQHIGKASTVKRGTSA.

The protein belongs to the universal ribosomal protein uL2 family.

The protein localises to the cytoplasm. The chain is Large ribosomal subunit protein uL2 (RpL8) from Mamestra brassicae (Cabbage moth).